We begin with the raw amino-acid sequence, 292 residues long: Proteasome subunit beta (292 aa).

The propeptide at 1–62 (MSESLGSVPG…HRAADDIPHG (62 aa)) is removed in mature form; by autocatalysis. Threonine 63 acts as the Nucleophile in catalysis.

The protein belongs to the peptidase T1B family. The 20S proteasome core is composed of 14 alpha and 14 beta subunits that assemble into four stacked heptameric rings, resulting in a barrel-shaped structure. The two inner rings, each composed of seven catalytic beta subunits, are sandwiched by two outer rings, each composed of seven alpha subunits. The catalytic chamber with the active sites is on the inside of the barrel. Has a gated structure, the ends of the cylinder being occluded by the N-termini of the alpha-subunits. Is capped by the proteasome-associated ATPase, ARC.

The protein resides in the cytoplasm. The enzyme catalyses Cleavage of peptide bonds with very broad specificity.. The protein operates within protein degradation; proteasomal Pup-dependent pathway. Its activity is regulated as follows. The formation of the proteasomal ATPase ARC-20S proteasome complex, likely via the docking of the C-termini of ARC into the intersubunit pockets in the alpha-rings, may trigger opening of the gate for substrate entry. Interconversion between the open-gate and close-gate conformations leads to a dynamic regulation of the 20S proteasome proteolysis activity. In terms of biological role, component of the proteasome core, a large protease complex with broad specificity involved in protein degradation. The chain is Proteasome subunit beta from Gordonia bronchialis (strain ATCC 25592 / DSM 43247 / BCRC 13721 / JCM 3198 / KCTC 3076 / NBRC 16047 / NCTC 10667) (Rhodococcus bronchialis).